The following is a 227-amino-acid chain: MEGKMPLIGEKFPEMEVVTNLGNIKLPDDFKGKWFVLFSHPGDFTPVCTTEFFSFAKHHDDFKKLNTELIGLSVDSKISHIEWINWIKQNLKIDIKFPIIADPMGHVATKLGMIQAQSATQTVRAVFIVDDRSTIRAILYYPMETGRNISEILRLIKSLQMVDKYKIVTPANWPNNEIIGDNVLNPPPATQNDIEERTKKYKGYAWWLTYQDANKADVDEAKEITGE.

The Thioredoxin domain occupies 6–161; it reads PLIGEKFPEM…ILRLIKSLQM (156 aa). Cysteine 48 serves as the catalytic Cysteine sulfenic acid (-SOH) intermediate. Arginine 124 contributes to the substrate binding site.

Belongs to the peroxiredoxin family. Prx6 subfamily. Homodecamer. Pentamer of dimers that assemble into a ring structure.

The protein localises to the cytoplasm. It carries out the reaction a hydroperoxide + [thioredoxin]-dithiol = an alcohol + [thioredoxin]-disulfide + H2O. Thiol-specific peroxidase that catalyzes the reduction of hydrogen peroxide and organic hydroperoxides to water and alcohols, respectively. Plays a role in cell protection against oxidative stress by detoxifying peroxides. This chain is Peroxiredoxin 1, found in Picrophilus torridus (strain ATCC 700027 / DSM 9790 / JCM 10055 / NBRC 100828 / KAW 2/3).